A 446-amino-acid polypeptide reads, in one-letter code: Amino-acid acetyltransferase (446 aa).

The region spanning 299–431 is the N-acetyltransferase domain; that stretch reads EQVRDAEIDD…SHLPMKKQKL (133 aa).

Belongs to the acetyltransferase family. ArgA subfamily.

It is found in the cytoplasm. The enzyme catalyses L-glutamate + acetyl-CoA = N-acetyl-L-glutamate + CoA + H(+). The protein operates within amino-acid biosynthesis; L-arginine biosynthesis; N(2)-acetyl-L-ornithine from L-glutamate: step 1/4. The chain is Amino-acid acetyltransferase from Aliivibrio fischeri (strain MJ11) (Vibrio fischeri).